A 109-amino-acid polypeptide reads, in one-letter code: Small ribosomal subunit protein bS6 (109 aa).

This sequence belongs to the bacterial ribosomal protein bS6 family.

Functionally, binds together with bS18 to 16S ribosomal RNA. This Ehrlichia ruminantium (strain Gardel) protein is Small ribosomal subunit protein bS6.